Reading from the N-terminus, the 310-residue chain is Putative carbonic anhydrase 5 (310 aa).

The N-terminal stretch at 1–20 (MPSHLLVLSLLVALLVVVSC) is a signal peptide. The Alpha-carbonic anhydrase domain occupies 26–280 (HGWGYDENNG…LNGRRIQYRP (255 aa)). H117, H119, and H142 together coordinate Zn(2+). 223-224 (TT) serves as a coordination point for substrate.

The protein belongs to the alpha-carbonic anhydrase family.

It localises to the secreted. The catalysed reaction is hydrogencarbonate + H(+) = CO2 + H2O. In terms of biological role, reversible hydration of carbon dioxide. This chain is Putative carbonic anhydrase 5 (cah-5), found in Caenorhabditis elegans.